Reading from the N-terminus, the 207-residue chain is Large ribosomal subunit protein uL4 (207 aa).

The segment at 53 to 76 (NRSAVRGGGRKPWRQKGTGRARQG) is disordered. The segment covering 60–71 (GGRKPWRQKGTG) has biased composition (basic residues).

It belongs to the universal ribosomal protein uL4 family. In terms of assembly, part of the 50S ribosomal subunit.

Its function is as follows. One of the primary rRNA binding proteins, this protein initially binds near the 5'-end of the 23S rRNA. It is important during the early stages of 50S assembly. It makes multiple contacts with different domains of the 23S rRNA in the assembled 50S subunit and ribosome. In terms of biological role, forms part of the polypeptide exit tunnel. In Staphylococcus saprophyticus subsp. saprophyticus (strain ATCC 15305 / DSM 20229 / NCIMB 8711 / NCTC 7292 / S-41), this protein is Large ribosomal subunit protein uL4.